The sequence spans 201 residues: Small ribosomal subunit protein uS4c (201 aa).

The tract at residues 15–43 (LGALPGLTRKTPKSGSNQKKKFHSGKKEQ) is disordered. Residues 89-150 (MRLDNILFRL…NQRSKRLVQN (62 aa)) enclose the S4 RNA-binding domain.

This sequence belongs to the universal ribosomal protein uS4 family. Part of the 30S ribosomal subunit. Contacts protein S5. The interaction surface between S4 and S5 is involved in control of translational fidelity.

It localises to the plastid. It is found in the chloroplast. In terms of biological role, one of the primary rRNA binding proteins, it binds directly to 16S rRNA where it nucleates assembly of the body of the 30S subunit. With S5 and S12 plays an important role in translational accuracy. In Sorghum bicolor (Sorghum), this protein is Small ribosomal subunit protein uS4c (rps4).